A 235-amino-acid polypeptide reads, in one-letter code: RAD9, HUS1, RAD1-interacting nuclear orphan protein 1 (235 aa).

Serine 50 carries the phosphoserine modification. Positions 54–60 match the RAD1-binding motif motif; it reads SWVLPQF. The tract at residues 66–106 is disordered; it reads SRFPTHRKHHRDQARHPTRRSTCKFPRLTFESPESSSSETL. Residues 69 to 87 show a composition bias toward basic residues; it reads PTHRKHHRDQARHPTRRST. Residues 96 to 106 show a composition bias toward low complexity; that stretch reads ESPESSSSETL. Residues 123–130 carry the D-box motif; sequence RRPLVPLF. The segment at 156–198 is disordered; the sequence is QTPGSSVREDPISPDQKENSLPSCILGPRTPRTPEPGPVLVKD. Basic and acidic residues predominate over residues 162–173; sequence VREDPISPDQKE. The KEN box motif lies at 171-175; sequence QKENS.

Interacts (when phosphorylated by PLK1) with POLQ; promoting POLQ recruitment to DNA damage sites. Interacts with RAD1; interaction is direct and promotes association with the 9-1-1 (RAD9-RAD1-HUS1) complex. Interacts with RAD18. Interacts with TOPBP1. Interacts with UBE2N. Post-translationally, phosphorylated at Ser-50 by PLK1, promoting interaction with polymerase theta (POLQ). In terms of processing, ubiquitinated and degraded by the APC/C complex upon mitotic exit.

Its subcellular location is the nucleus. It localises to the chromosome. Involved in microhomology-mediated end-joining (MMEJ) DNA repair by promoting recruitment of polymerase theta (POLQ) to DNA damage sites during mitosis. MMEJ is an alternative non-homologous end-joining (NHEJ) machinery that takes place during mitosis to repair double-strand breaks in DNA that originate in S-phase. Accumulates in M-phase; following phosphorylation by PLK1, interacts with POLQ, enabling its recruitment to double-strand breaks for subsequent repair. Also involved in the DNA damage response (DDR) signaling in response to genotoxic stresses such as ionizing radiation (IR) during the S phase. Recruited to sites of DNA damage through interaction with the 9-1-1 cell-cycle checkpoint response complex and TOPBP1 in a ATR-dependent manner. Required for the progression of the G1 to S phase transition. Plays a role in the stimulation of CHEK1 phosphorylation. This is RAD9, HUS1, RAD1-interacting nuclear orphan protein 1 (Rhno1) from Rattus norvegicus (Rat).